A 254-amino-acid polypeptide reads, in one-letter code: Serotonin N-acetyltransferase 1, chloroplastic (254 aa).

The N-terminal 74 residues, methionine 1–asparagine 74, are a transit peptide targeting the chloroplast. Residues isoleucine 111–phenylalanine 254 form the N-acetyltransferase domain.

It belongs to the acetyltransferase family. Expressed in roots and shoots.

It localises to the plastid. It is found in the chloroplast. The protein localises to the nucleus. It carries out the reaction serotonin + acetyl-CoA = N-acetylserotonin + CoA + H(+). The enzyme catalyses tyramine + acetyl-CoA = N-acetyltyramine + CoA + H(+). It catalyses the reaction tryptamine + acetyl-CoA = N-acetyltryptamine + CoA + H(+). The catalysed reaction is 5-methoxytryptamine + acetyl-CoA = melatonin + CoA + H(+). It participates in aromatic compound metabolism; melatonin biosynthesis; melatonin from serotonin: step 1/2. In terms of biological role, catalyzes the N-acetylation of serotonin into N-acetylserotonin, the penultimate step in the synthesis of melatonin. Catalyzes in vitro the N-acetylation of tryptamine to produce N-acetyltryptamine, 5-methoxytryptamine to produce melatonin and tyramine to produce N-acetyltyramine. In Oryza sativa subsp. japonica (Rice), this protein is Serotonin N-acetyltransferase 1, chloroplastic.